Here is a 128-residue protein sequence, read N- to C-terminus: Ribosome-binding factor A (128 aa).

This sequence belongs to the RbfA family. Monomer. Binds 30S ribosomal subunits, but not 50S ribosomal subunits or 70S ribosomes.

It localises to the cytoplasm. One of several proteins that assist in the late maturation steps of the functional core of the 30S ribosomal subunit. Associates with free 30S ribosomal subunits (but not with 30S subunits that are part of 70S ribosomes or polysomes). Required for efficient processing of 16S rRNA. May interact with the 5'-terminal helix region of 16S rRNA. This is Ribosome-binding factor A from Acidithiobacillus ferrooxidans (strain ATCC 23270 / DSM 14882 / CIP 104768 / NCIMB 8455) (Ferrobacillus ferrooxidans (strain ATCC 23270)).